The following is a 135-amino-acid chain: Small ribosomal subunit protein uS12 (135 aa).

Asp89 is subject to 3-methylthioaspartic acid. The disordered stretch occupies residues 101-135; sequence SLDTSGVADRKQSRSKYGAKQPKAGAAAPAKGKGR. Over residues 118–135 the composition is skewed to low complexity; the sequence is GAKQPKAGAAAPAKGKGR.

This sequence belongs to the universal ribosomal protein uS12 family. As to quaternary structure, part of the 30S ribosomal subunit. Contacts proteins S8 and S17. May interact with IF1 in the 30S initiation complex.

Its function is as follows. With S4 and S5 plays an important role in translational accuracy. Functionally, interacts with and stabilizes bases of the 16S rRNA that are involved in tRNA selection in the A site and with the mRNA backbone. Located at the interface of the 30S and 50S subunits, it traverses the body of the 30S subunit contacting proteins on the other side and probably holding the rRNA structure together. The combined cluster of proteins S8, S12 and S17 appears to hold together the shoulder and platform of the 30S subunit. The chain is Small ribosomal subunit protein uS12 from Chlorobium limicola (strain DSM 245 / NBRC 103803 / 6330).